The sequence spans 540 residues: Membrane protein insertase YidC (540 aa).

Residues 6–26 (NILLIALALVSFLLFQQWQVA) form a helical membrane-spanning segment. The interval 36–63 (QAQSSSTLPAPSFADELDPVPGQQQASA) is disordered. 4 consecutive transmembrane segments (helical) span residues 342–362 (AFIQ…TFIV), 417–437 (LGGC…YWAL), 455–475 (LSAQ…MFLI), and 496–516 (PVMF…YWLV).

It belongs to the OXA1/ALB3/YidC family. Type 1 subfamily. As to quaternary structure, interacts with the Sec translocase complex via SecD. Specifically interacts with transmembrane segments of nascent integral membrane proteins during membrane integration.

The protein resides in the cell inner membrane. Required for the insertion and/or proper folding and/or complex formation of integral membrane proteins into the membrane. Involved in integration of membrane proteins that insert both dependently and independently of the Sec translocase complex, as well as at least some lipoproteins. Aids folding of multispanning membrane proteins. The sequence is that of Membrane protein insertase YidC from Vibrio campbellii (strain ATCC BAA-1116).